Here is a 271-residue protein sequence, read N- to C-terminus: 2,3,4,5-tetrahydropyridine-2,6-dicarboxylate N-succinyltransferase (271 aa).

Positions 102 and 139 each coordinate substrate.

It belongs to the transferase hexapeptide repeat family. As to quaternary structure, homotrimer.

Its subcellular location is the cytoplasm. The enzyme catalyses (S)-2,3,4,5-tetrahydrodipicolinate + succinyl-CoA + H2O = (S)-2-succinylamino-6-oxoheptanedioate + CoA. Its pathway is amino-acid biosynthesis; L-lysine biosynthesis via DAP pathway; LL-2,6-diaminopimelate from (S)-tetrahydrodipicolinate (succinylase route): step 1/3. The protein is 2,3,4,5-tetrahydropyridine-2,6-dicarboxylate N-succinyltransferase of Coxiella burnetii (strain RSA 331 / Henzerling II).